We begin with the raw amino-acid sequence, 159 residues long: 2-C-methyl-D-erythritol 2,4-cyclodiphosphate synthase (159 aa).

D10 and H12 together coordinate a divalent metal cation. Residues D10–H12 and H37–S38 each bind 4-CDP-2-C-methyl-D-erythritol 2-phosphate. H45 lines the a divalent metal cation pocket. Residues D59–G61, F64–D68, A103–L109, T135–E138, F142, and R145 contribute to the 4-CDP-2-C-methyl-D-erythritol 2-phosphate site.

Belongs to the IspF family. As to quaternary structure, homotrimer. The cofactor is a divalent metal cation.

The enzyme catalyses 4-CDP-2-C-methyl-D-erythritol 2-phosphate = 2-C-methyl-D-erythritol 2,4-cyclic diphosphate + CMP. The protein operates within isoprenoid biosynthesis; isopentenyl diphosphate biosynthesis via DXP pathway; isopentenyl diphosphate from 1-deoxy-D-xylulose 5-phosphate: step 4/6. Its function is as follows. Involved in the biosynthesis of isopentenyl diphosphate (IPP) and dimethylallyl diphosphate (DMAPP), two major building blocks of isoprenoid compounds. Catalyzes the conversion of 4-diphosphocytidyl-2-C-methyl-D-erythritol 2-phosphate (CDP-ME2P) to 2-C-methyl-D-erythritol 2,4-cyclodiphosphate (ME-CPP) with a corresponding release of cytidine 5-monophosphate (CMP). This chain is 2-C-methyl-D-erythritol 2,4-cyclodiphosphate synthase, found in Francisella tularensis subsp. holarctica (strain FTNF002-00 / FTA).